We begin with the raw amino-acid sequence, 210 residues long: Mediator of RNA polymerase II transcription subunit 20 (210 aa).

The protein belongs to the Mediator complex subunit 20 family. Component of the Mediator complex, which is composed of at least 21 subunits that form three structurally distinct submodules. The Mediator head module contains MED6, MED8, MED11, SRB4/MED17, SRB5/MED18, ROX3/MED19, SRB2/MED20 and SRB6/MED22, the middle module contains MED1, MED4, NUT1/MED5, MED7, CSE2/MED9, NUT2/MED10, SRB7/MED21 and SOH1/MED31, and the tail module contains MED2, PGD1/MED3, RGR1/MED14, GAL11/MED15 and SIN4/MED16. The head and the middle modules interact directly with RNA polymerase II, whereas the elongated tail module interacts with gene-specific regulatory proteins. MED1 interacts directly with MED4 and MED7. SRB2/MED20 interacts directly with SRB4/MED17 and SRB5/MED18.

It is found in the nucleus. Functionally, component of the Mediator complex, a coactivator involved in the regulated transcription of nearly all RNA polymerase II-dependent genes. Mediator functions as a bridge to convey information from gene-specific regulatory proteins to the basal RNA polymerase II transcription machinery. The Mediator complex, having a compact conformation in its free form, is recruited to promoters by direct interactions with regulatory proteins and serves for the assembly of a functional preinitiation complex with RNA polymerase II and the general transcription factors. The Mediator complex unfolds to an extended conformation and partially surrounds RNA polymerase II, specifically interacting with the unphosphorylated form of the C-terminal domain (CTD) of RNA polymerase II. The Mediator complex dissociates from the RNA polymerase II holoenzyme and stays at the promoter when transcriptional elongation begins. The sequence is that of Mediator of RNA polymerase II transcription subunit 20 (SRB2) from Saccharomyces cerevisiae (strain ATCC 204508 / S288c) (Baker's yeast).